We begin with the raw amino-acid sequence, 324 residues long: Lignin-forming anionic peroxidase (324 aa).

The first 22 residues, 1-22, serve as a signal peptide directing secretion; sequence MSFLRFVGAILFLVAIFGASNA. Position 23 is a pyrrolidone carboxylic acid (Q23). 4 cysteine pairs are disulfide-bonded: C33–C111, C66–C71, C117–C320, and C196–C228. N35 carries N-linked (GlcNAc...) asparagine glycosylation. The active-site Proton acceptor is H64. Ca(2+)-binding residues include D65, V68, G70, D72, and S74. The N-linked (GlcNAc...) asparagine glycan is linked to N150. P159 contacts substrate. H189 contributes to the heme b binding site. T190 provides a ligand contact to Ca(2+). A glycan (N-linked (GlcNAc...) asparagine) is linked at N207. Ca(2+)-binding residues include D242, T245, and D250.

The protein belongs to the peroxidase family. Classical plant (class III) peroxidase subfamily. Requires Ca(2+) as cofactor. It depends on heme b as a cofactor.

Its subcellular location is the secreted. The enzyme catalyses 2 a phenolic donor + H2O2 = 2 a phenolic radical donor + 2 H2O. Removal of H(2)O(2), oxidation of toxic reductants, biosynthesis and degradation of lignin, suberization, auxin catabolism, response to environmental stresses such as wounding, pathogen attack and oxidative stress. These functions might be dependent on each isozyme/isoform in each plant tissue. In terms of biological role, plays an integral role in secondary cell wall biosynthesis by the polymerization of cinnamyl alcohols into lignin and by forming rigid cross-links between cellulose, pectin, hydroxy-proline-rich glycoproteins, and lignin. This Nicotiana tabacum (Common tobacco) protein is Lignin-forming anionic peroxidase.